The primary structure comprises 24 residues: U1-plectoxin-Pt1e (24 aa).

Cys4 and Cys18 are joined by a disulfide.

Belongs to the neurotoxin 02 (plectoxin) family. 02 (plectoxin) subfamily. In terms of processing, contains 5 disulfide bonds. As to expression, expressed by the venom gland.

Its subcellular location is the secreted. Functionally, potent toxin that may paralyze and/or kill insect pests such as H.virescens (lepidoptera), S.exigua (beet armyworm) and M.sexta (tobacco hornworm). The protein is U1-plectoxin-Pt1e of Plectreurys tristis (Spider).